The following is a 474-amino-acid chain: Homeobox protein PKNOX2 (474 aa).

Residues 1–42 (MMQHASPAPALTMMATQNVPPPPYQDSPQMTATAQPPSKAQA) are disordered. Polar residues predominate over residues 26–38 (DSPQMTATAQPPS). Residues 96–179 (GSECITSASF…MHSDNLLRND (84 aa)) form the MEIS N-terminal domain. The homeobox DNA-binding region spans 291-350 (KRGVLPKHATNIMRSWLFQHLMHPYPTEDEKRQIAAQTNLTLLQVNNWFINARRRILQPM). Disordered stretches follow at residues 351–371 (LDASNPDPAPKAKKIKSQHRP), 385–405 (LQQQGGTPGTNPDGSINLDNL), and 423–474 (AAHD…DSLE). Residues 361–371 (KAKKIKSQHRP) show a composition bias toward basic residues. Acidic residues predominate over residues 429–456 (LDGTEEEDEDDMEEEEEEEEELEEEADE).

It belongs to the TALE/MEIS homeobox family.

It is found in the nucleus. In Mus musculus (Mouse), this protein is Homeobox protein PKNOX2 (Pknox2).